Here is a 279-residue protein sequence, read N- to C-terminus: Biotin synthase (279 aa).

The Radical SAM core domain occupies 2 to 228 (KTIMLCAISS…NARIMIAGGR (227 aa)). [4Fe-4S] cluster is bound by residues C17, C21, and C24. Residues C61, C96, C154, and R221 each coordinate [2Fe-2S] cluster.

The protein belongs to the radical SAM superfamily. Biotin synthase family. In terms of assembly, homodimer. [4Fe-4S] cluster serves as cofactor. [2Fe-2S] cluster is required as a cofactor.

It catalyses the reaction (4R,5S)-dethiobiotin + (sulfur carrier)-SH + 2 reduced [2Fe-2S]-[ferredoxin] + 2 S-adenosyl-L-methionine = (sulfur carrier)-H + biotin + 2 5'-deoxyadenosine + 2 L-methionine + 2 oxidized [2Fe-2S]-[ferredoxin]. Its pathway is cofactor biosynthesis; biotin biosynthesis; biotin from 7,8-diaminononanoate: step 2/2. Its function is as follows. Catalyzes the conversion of dethiobiotin (DTB) to biotin by the insertion of a sulfur atom into dethiobiotin via a radical-based mechanism. The polypeptide is Biotin synthase (Campylobacter curvus (strain 525.92)).